The chain runs to 237 residues: Ribonuclease 3 (237 aa).

The 130-residue stretch at 4–133 folds into the RNase III domain; sequence LTELEKSLGV…VLAAIYLDKG (130 aa). A Mg(2+)-binding site is contributed by E46. Residues D50 and E122 contribute to the active site. E122 is a Mg(2+) binding site. The 70-residue stretch at 160–229 folds into the DRBM domain; sequence DYKSRLQELV…AKEALQQFEN (70 aa).

The protein belongs to the ribonuclease III family. In terms of assembly, homodimer. Mg(2+) is required as a cofactor.

The protein resides in the cytoplasm. The catalysed reaction is Endonucleolytic cleavage to 5'-phosphomonoester.. In terms of biological role, digests double-stranded RNA. Involved in the processing of primary rRNA transcript to yield the immediate precursors to the large and small rRNAs (23S and 16S). Processes some mRNAs, and tRNAs when they are encoded in the rRNA operon. Processes pre-crRNA and tracrRNA of type II CRISPR loci if present in the organism. In Dehalococcoides mccartyi (strain ATCC BAA-2266 / KCTC 15142 / 195) (Dehalococcoides ethenogenes (strain 195)), this protein is Ribonuclease 3.